The following is a 215-amino-acid chain: MRTGIIAQKIGMTSVFNDKGERISLTLVKVDDCQVVGHKTLEKHGYNALVIGIKDKKISRVTKPMKQVFANAKISPKTKLKEFRISEENFIDIAASLEVDYFTAGQFVDITATTIGKGFAGSMKRHNFRGLEASHGVSISHRSHGSTGQRQDPGKVFKGKKMAGHMGCNQVTIQNLKIFAVDKERKLIMIQGSIPGHKNSYLSVKDAIKKISITV.

A disordered region spans residues 136-155; sequence GVSISHRSHGSTGQRQDPGK. Gln-151 carries the post-translational modification N5-methylglutamine.

The protein belongs to the universal ribosomal protein uL3 family. In terms of assembly, part of the 50S ribosomal subunit. Forms a cluster with proteins L14 and L19. In terms of processing, methylated by PrmB.

One of the primary rRNA binding proteins, it binds directly near the 3'-end of the 23S rRNA, where it nucleates assembly of the 50S subunit. The protein is Large ribosomal subunit protein uL3 of Rickettsia felis (strain ATCC VR-1525 / URRWXCal2) (Rickettsia azadi).